The primary structure comprises 416 residues: MSLVAIGINHKTATVDLREKVAFSPDKIHDAMRSLACTTSSNEAVIVSTCNRTELYCNNARAEEVIHWLESYHNLSHDELMPCVYHHEGQEAVRHLMRVASGLDSLVLGEPQILGQVKQSFAKAKEAGTVAVTLDRLFQSTFSVAKKVRTETEIGTAAVSVAFAAVSMAKHIFSSLASTKVLLIGAGETIELVARHLKENGVSSMVVANRTVERAQAMCEEFGATAITLSQIPDFLPKADIVISSTASPLPILGKGMVEKALKQRRHQPMLLVDIAVPRDIEAEVGELDDAFLYTVDDLQSIIEQNMASRKEAAEQAEVIAQEQSFLFMDWIRSLESVDSIREYRTASMAIKDELVERALNKLAQGADGEQVILELANKLTNRLIHAPTQALTTASRQGDLNTLGQLRTALGLDKH.

Residues T49–R52, S105, E110–Q112, and Q116 contribute to the substrate site. C50 functions as the Nucleophile in the catalytic mechanism. Residue G185 to I190 coordinates NADP(+).

The protein belongs to the glutamyl-tRNA reductase family. In terms of assembly, homodimer.

It carries out the reaction (S)-4-amino-5-oxopentanoate + tRNA(Glu) + NADP(+) = L-glutamyl-tRNA(Glu) + NADPH + H(+). The protein operates within porphyrin-containing compound metabolism; protoporphyrin-IX biosynthesis; 5-aminolevulinate from L-glutamyl-tRNA(Glu): step 1/2. Catalyzes the NADPH-dependent reduction of glutamyl-tRNA(Glu) to glutamate 1-semialdehyde (GSA). The protein is Glutamyl-tRNA reductase of Shewanella amazonensis (strain ATCC BAA-1098 / SB2B).